A 295-amino-acid chain; its full sequence is Protoheme IX farnesyltransferase (295 aa).

Transmembrane regions (helical) follow at residues 9-29 (ITKP…FFLA), 36-56 (FGVF…GCVF), 80-100 (LVSL…GVAL), 108-128 (LAAL…SLYL), 135-155 (GTLV…CAVS), 163-183 (LTLL…IAIF), 209-229 (ILLY…GGYA), 230-250 (GLNY…MAWK), and 265-285 (FVFS…DFQV).

The protein belongs to the UbiA prenyltransferase family. Protoheme IX farnesyltransferase subfamily.

Its subcellular location is the cell inner membrane. It carries out the reaction heme b + (2E,6E)-farnesyl diphosphate + H2O = Fe(II)-heme o + diphosphate. Its pathway is porphyrin-containing compound metabolism; heme O biosynthesis; heme O from protoheme: step 1/1. Converts heme B (protoheme IX) to heme O by substitution of the vinyl group on carbon 2 of heme B porphyrin ring with a hydroxyethyl farnesyl side group. This chain is Protoheme IX farnesyltransferase, found in Pseudomonas syringae pv. tomato (strain ATCC BAA-871 / DC3000).